Consider the following 375-residue polypeptide: Aminomethyltransferase (375 aa).

Belongs to the GcvT family. As to quaternary structure, the glycine cleavage system is composed of four proteins: P, T, L and H.

It carries out the reaction N(6)-[(R)-S(8)-aminomethyldihydrolipoyl]-L-lysyl-[protein] + (6S)-5,6,7,8-tetrahydrofolate = N(6)-[(R)-dihydrolipoyl]-L-lysyl-[protein] + (6R)-5,10-methylene-5,6,7,8-tetrahydrofolate + NH4(+). In terms of biological role, the glycine cleavage system catalyzes the degradation of glycine. The chain is Aminomethyltransferase from Ralstonia pickettii (strain 12J).